The chain runs to 366 residues: Ferredoxin--NADP reductase (366 aa).

Positions 51, 59, 64, 104, 139, 308, and 349 each coordinate FAD.

It belongs to the ferredoxin--NADP reductase type 2 family. Homodimer. FAD serves as cofactor.

The catalysed reaction is 2 reduced [2Fe-2S]-[ferredoxin] + NADP(+) + H(+) = 2 oxidized [2Fe-2S]-[ferredoxin] + NADPH. This is Ferredoxin--NADP reductase from Methylibium petroleiphilum (strain ATCC BAA-1232 / LMG 22953 / PM1).